Reading from the N-terminus, the 514-residue chain is Peptide chain release factor 3 (514 aa).

Residues 8–268 (KKRRTFAIIS…TFLKFAPEPH (261 aa)) enclose the tr-type G domain. Residues 17-24 (SHPDAGKT), 85-89 (DTPGH), and 139-142 (NKLD) each bind GTP.

It belongs to the TRAFAC class translation factor GTPase superfamily. Classic translation factor GTPase family. PrfC subfamily.

It is found in the cytoplasm. Increases the formation of ribosomal termination complexes and stimulates activities of RF-1 and RF-2. It binds guanine nucleotides and has strong preference for UGA stop codons. It may interact directly with the ribosome. The stimulation of RF-1 and RF-2 is significantly reduced by GTP and GDP, but not by GMP. In Streptococcus gordonii (strain Challis / ATCC 35105 / BCRC 15272 / CH1 / DL1 / V288), this protein is Peptide chain release factor 3.